The chain runs to 161 residues: Putative 4-hydroxy-4-methyl-2-oxoglutarate aldolase (161 aa).

Residues G75–L78 and R97 each bind substrate. D98 contributes to the a divalent metal cation binding site.

Belongs to the class II aldolase/RraA-like family. In terms of assembly, homotrimer. It depends on a divalent metal cation as a cofactor.

The catalysed reaction is 4-hydroxy-4-methyl-2-oxoglutarate = 2 pyruvate. It catalyses the reaction oxaloacetate + H(+) = pyruvate + CO2. Functionally, catalyzes the aldol cleavage of 4-hydroxy-4-methyl-2-oxoglutarate (HMG) into 2 molecules of pyruvate. Also contains a secondary oxaloacetate (OAA) decarboxylase activity due to the common pyruvate enolate transition state formed following C-C bond cleavage in the retro-aldol and decarboxylation reactions. The chain is Putative 4-hydroxy-4-methyl-2-oxoglutarate aldolase from Vibrio cholerae serotype O1 (strain ATCC 39315 / El Tor Inaba N16961).